Consider the following 130-residue polypeptide: Small ribosomal subunit protein uS11 (130 aa).

The protein belongs to the universal ribosomal protein uS11 family. Part of the 30S ribosomal subunit. Interacts with proteins S7 and S18. Binds to IF-3.

In terms of biological role, located on the platform of the 30S subunit, it bridges several disparate RNA helices of the 16S rRNA. Forms part of the Shine-Dalgarno cleft in the 70S ribosome. The sequence is that of Small ribosomal subunit protein uS11 from Thiobacillus denitrificans (strain ATCC 25259 / T1).